The sequence spans 1401 residues: DNA-directed RNA polymerase subunit beta' (1401 aa).

Residues cysteine 71, cysteine 73, cysteine 86, and cysteine 89 each contribute to the Zn(2+) site. 3 residues coordinate Mg(2+): aspartate 462, aspartate 464, and aspartate 466. The Zn(2+) site is built by cysteine 810, cysteine 884, cysteine 891, and cysteine 894. A disordered region spans residues 1378–1401 (EKQATIVPSAPEPEPLALPTPEQS).

The protein belongs to the RNA polymerase beta' chain family. As to quaternary structure, the RNAP catalytic core consists of 2 alpha, 1 beta, 1 beta' and 1 omega subunit. When a sigma factor is associated with the core the holoenzyme is formed, which can initiate transcription. It depends on Mg(2+) as a cofactor. Zn(2+) is required as a cofactor.

It catalyses the reaction RNA(n) + a ribonucleoside 5'-triphosphate = RNA(n+1) + diphosphate. In terms of biological role, DNA-dependent RNA polymerase catalyzes the transcription of DNA into RNA using the four ribonucleoside triphosphates as substrates. This chain is DNA-directed RNA polymerase subunit beta', found in Rhodopseudomonas palustris (strain BisB18).